Reading from the N-terminus, the 55-residue chain is AYFITDACISCGACESECPVSPISPGDSVYVIDADACIECGACANVCPVDAPQQK.

4Fe-4S ferredoxin-type domains are found at residues 2 to 27 (YFIT…SPGD) and 28 to 55 (SVYV…PQQK). 8 residues coordinate [4Fe-4S] cluster: cysteine 8, cysteine 11, cysteine 14, cysteine 18, cysteine 37, cysteine 40, cysteine 43, and cysteine 47.

[4Fe-4S] cluster is required as a cofactor.

In terms of biological role, ferredoxins are iron-sulfur proteins that transfer electrons in a wide variety of metabolic reactions. This chain is Ferredoxin, found in Acetivibrio thermocellus (Hungateiclostridium thermocellum).